Reading from the N-terminus, the 744-residue chain is Polyadenylate-binding protein, cytoplasmic and nuclear (744 aa).

Over residues 1 to 11 (MSEVANSTSPV) the composition is skewed to polar residues. Residues 1 to 42 (MSEVANSTSPVQDGADANGAQINTNVPAASGDAPTPTTAAQQ) form a disordered region. A compositionally biased stretch (low complexity) spans 33-42 (APTPTTAAQQ). 4 RRM domains span residues 48 to 126 (ASLY…WSQR), 136 to 213 (GNVF…HHIP), 229 to 306 (TNIY…RAQK), and 332 to 462 (VNLY…LAQR). 4 disordered regions span residues 368–411 (EEKK…AGDK), 527–550 (GRGA…NAQQ), 607–651 (IAGG…PGVD), and 723–744 (VKNK…EEKA). Residues 376 to 397 (KEVKEEKKEDEKKEDEEAKEGS) show a composition bias toward basic and acidic residues. Gly residues-rich tracts occupy residues 527–545 (GRGA…GRGG), 609–632 (GGPG…GGRG), and 640–649 (PQGGRPGGPG). In terms of domain architecture, PABC spans 647-724 (GPGVDMSVLS…AMSVYDEYVK (78 aa)).

Belongs to the polyadenylate-binding protein type-1 family.

It is found in the cytoplasm. The protein resides in the nucleus. Functionally, binds the poly(A) tail of mRNA. Appears to be an important mediator of the multiple roles of the poly(A) tail in mRNA biogenesis, stability and translation. In the nucleus, involved in both mRNA cleavage and polyadenylation. Is also required for efficient mRNA export to the cytoplasm. Acts in concert with a poly(A)-specific nuclease (PAN) to affect poly(A) tail shortening, which may occur concomitantly with either nucleocytoplasmic mRNA transport or translational initiation. In the cytoplasm, stimulates translation initiation and regulates mRNA decay through translation termination-coupled poly(A) shortening, probably mediated by PAN. This is Polyadenylate-binding protein, cytoplasmic and nuclear (PAB1) from Phaeosphaeria nodorum (strain SN15 / ATCC MYA-4574 / FGSC 10173) (Glume blotch fungus).